The following is a 179-amino-acid chain: Large ribosomal subunit protein uL6 (179 aa).

Belongs to the universal ribosomal protein uL6 family. Part of the 50S ribosomal subunit.

This protein binds to the 23S rRNA, and is important in its secondary structure. It is located near the subunit interface in the base of the L7/L12 stalk, and near the tRNA binding site of the peptidyltransferase center. This Streptomyces griseus subsp. griseus (strain JCM 4626 / CBS 651.72 / NBRC 13350 / KCC S-0626 / ISP 5235) protein is Large ribosomal subunit protein uL6.